The primary structure comprises 87 residues: DNA-directed RNA polymerase subunit Rpo5 (87 aa).

It belongs to the archaeal Rpo5/eukaryotic RPB5 RNA polymerase subunit family. In terms of assembly, part of the RNA polymerase complex.

The protein resides in the cytoplasm. It catalyses the reaction RNA(n) + a ribonucleoside 5'-triphosphate = RNA(n+1) + diphosphate. Its function is as follows. DNA-dependent RNA polymerase (RNAP) catalyzes the transcription of DNA into RNA using the four ribonucleoside triphosphates as substrates. This chain is DNA-directed RNA polymerase subunit Rpo5, found in Thermoplasma volcanium (strain ATCC 51530 / DSM 4299 / JCM 9571 / NBRC 15438 / GSS1).